The following is a 443-amino-acid chain: KICSTOR complex protein ITFG2 (443 aa).

Residues 19–48 (FPHAICLGDVDNDALNELVVGDTSGKLSVY) form an FG-GAP 1; atypical repeat. At S104 the chain carries Phosphoserine. The stretch at 125–154 (NTKVMLISDIDGDGCYELVVGYTDRVVRAF) is one FG-GAP 2; atypical repeat. S219 carries the phosphoserine modification.

Part of the KICSTOR complex composed of KPTN, ITFG2, KICS2 and SZT2. SZT2 probably serves as a link between the other three proteins in the KICSTOR complex and may mediate the direct interaction with the GATOR complex via GATOR1. The KICSTOR complex interacts directly with the GATOR1 complex and most probably indirectly with the GATOR2 complex in an amino acid-independent manner.

The protein resides in the lysosome membrane. Functionally, as part of the KICSTOR complex functions in the amino acid-sensing branch of the TORC1 signaling pathway. Recruits, in an amino acid-independent manner, the GATOR1 complex to the lysosomal membranes and allows its interaction with GATOR2 and the RAG GTPases. Functions upstream of the RAG GTPases and is required to negatively regulate mTORC1 signaling in absence of amino acids. In absence of the KICSTOR complex mTORC1 is constitutively localized to the lysosome and activated. The KICSTOR complex is also probably involved in the regulation of mTORC1 by glucose. In Mus musculus (Mouse), this protein is KICSTOR complex protein ITFG2.